Consider the following 363-residue polypeptide: Ribosomal RNA large subunit methyltransferase M (363 aa).

Residues Ser-194, 227 to 230, Asp-246, Asp-266, and Asp-284 contribute to the S-adenosyl-L-methionine site; that span reads CPGG. Lys-313 serves as the catalytic Proton acceptor.

Belongs to the class I-like SAM-binding methyltransferase superfamily. RNA methyltransferase RlmE family. RlmM subfamily. As to quaternary structure, monomer.

The protein localises to the cytoplasm. The enzyme catalyses cytidine(2498) in 23S rRNA + S-adenosyl-L-methionine = 2'-O-methylcytidine(2498) in 23S rRNA + S-adenosyl-L-homocysteine + H(+). Catalyzes the 2'-O-methylation at nucleotide C2498 in 23S rRNA. In Haemophilus influenzae (strain ATCC 51907 / DSM 11121 / KW20 / Rd), this protein is Ribosomal RNA large subunit methyltransferase M.